The primary structure comprises 233 residues: Translation initiation factor IF-3 (233 aa).

Disordered regions lie at residues 1–21 (MAIQ…RTNR) and 184–233 (LQSQ…AAQR). A compositionally biased stretch (low complexity) spans 193-211 (AAAAAAPAAAPAAPAAGAP). Residues 212–223 (APAPAPAAPAPA) are compositionally biased toward pro residues. Low complexity predominate over residues 224 to 233 (PAAADPAAQR).

The protein belongs to the IF-3 family. As to quaternary structure, monomer.

It is found in the cytoplasm. In terms of biological role, IF-3 binds to the 30S ribosomal subunit and shifts the equilibrium between 70S ribosomes and their 50S and 30S subunits in favor of the free subunits, thus enhancing the availability of 30S subunits on which protein synthesis initiation begins. The chain is Translation initiation factor IF-3 from Anaeromyxobacter dehalogenans (strain 2CP-C).